Consider the following 308-residue polypeptide: Folate transporter 1, chloroplastic (308 aa).

Solcar repeat units follow at residues 4-94, 104-192, and 213-299; these read SWQW…AKQR, LSPA…LRKI, and ADYA…VLKL. Helical transmembrane passes span 10–30, 74–91, 110–130, 164–184, 216–236, and 274–293; these read ATAG…LDVV, VIGS…YGRA, LASA…IWLV, ALYK…IQFT, AALG…FQVI, and GLTA…FIVY.

Belongs to the mitochondrial carrier (TC 2.A.29) family. As to expression, ubiquitous.

The protein resides in the plastid. The protein localises to the chloroplast membrane. Mediates folate import into chloroplast. This is Folate transporter 1, chloroplastic (FOLT1) from Arabidopsis thaliana (Mouse-ear cress).